A 457-amino-acid polypeptide reads, in one-letter code: Bifunctional protein GlmU (457 aa).

Positions methionine 1–arginine 230 are pyrophosphorylase. Residues leucine 9–glycine 12, lysine 23, glutamine 73, and glycine 78–threonine 79 contribute to the UDP-N-acetyl-alpha-D-glucosamine site. Aspartate 103 serves as a coordination point for Mg(2+). Residues glycine 140, glutamate 155, asparagine 170, and asparagine 228 each contribute to the UDP-N-acetyl-alpha-D-glucosamine site. Asparagine 228 is a binding site for Mg(2+). The linker stretch occupies residues isoleucine 231–asparagine 251. Residues glycine 252 to lysine 457 form an N-acetyltransferase region. UDP-N-acetyl-alpha-D-glucosamine contacts are provided by arginine 333 and lysine 351. Histidine 363 (proton acceptor) is an active-site residue. The UDP-N-acetyl-alpha-D-glucosamine site is built by tyrosine 366 and asparagine 377. Acetyl-CoA is bound by residues asparagine 386–tyrosine 387, alanine 423, and arginine 440.

It in the N-terminal section; belongs to the N-acetylglucosamine-1-phosphate uridyltransferase family. The protein in the C-terminal section; belongs to the transferase hexapeptide repeat family. In terms of assembly, homotrimer. Requires Mg(2+) as cofactor.

Its subcellular location is the cytoplasm. It carries out the reaction alpha-D-glucosamine 1-phosphate + acetyl-CoA = N-acetyl-alpha-D-glucosamine 1-phosphate + CoA + H(+). The catalysed reaction is N-acetyl-alpha-D-glucosamine 1-phosphate + UTP + H(+) = UDP-N-acetyl-alpha-D-glucosamine + diphosphate. The protein operates within nucleotide-sugar biosynthesis; UDP-N-acetyl-alpha-D-glucosamine biosynthesis; N-acetyl-alpha-D-glucosamine 1-phosphate from alpha-D-glucosamine 6-phosphate (route II): step 2/2. It functions in the pathway nucleotide-sugar biosynthesis; UDP-N-acetyl-alpha-D-glucosamine biosynthesis; UDP-N-acetyl-alpha-D-glucosamine from N-acetyl-alpha-D-glucosamine 1-phosphate: step 1/1. It participates in bacterial outer membrane biogenesis; LPS lipid A biosynthesis. Its function is as follows. Catalyzes the last two sequential reactions in the de novo biosynthetic pathway for UDP-N-acetylglucosamine (UDP-GlcNAc). The C-terminal domain catalyzes the transfer of acetyl group from acetyl coenzyme A to glucosamine-1-phosphate (GlcN-1-P) to produce N-acetylglucosamine-1-phosphate (GlcNAc-1-P), which is converted into UDP-GlcNAc by the transfer of uridine 5-monophosphate (from uridine 5-triphosphate), a reaction catalyzed by the N-terminal domain. This chain is Bifunctional protein GlmU, found in Listeria welshimeri serovar 6b (strain ATCC 35897 / DSM 20650 / CCUG 15529 / CIP 8149 / NCTC 11857 / SLCC 5334 / V8).